Here is a 94-residue protein sequence, read N- to C-terminus: Integration host factor subunit beta (94 aa).

This sequence belongs to the bacterial histone-like protein family. In terms of assembly, heterodimer of an alpha and a beta chain.

Its function is as follows. This protein is one of the two subunits of integration host factor, a specific DNA-binding protein that functions in genetic recombination as well as in transcriptional and translational control. The protein is Integration host factor subunit beta of Brucella anthropi (strain ATCC 49188 / DSM 6882 / CCUG 24695 / JCM 21032 / LMG 3331 / NBRC 15819 / NCTC 12168 / Alc 37) (Ochrobactrum anthropi).